Consider the following 43-residue polypeptide: Protein PsbN (43 aa).

A helical membrane pass occupies residues 7-29 (VTIFLSGLLVSFTGYALYTAFGQ).

The protein belongs to the PsbN family.

It localises to the plastid. The protein localises to the chloroplast thylakoid membrane. Functionally, may play a role in photosystem I and II biogenesis. This Ipomoea purpurea (Common morning glory) protein is Protein PsbN.